A 147-amino-acid polypeptide reads, in one-letter code: Thyrotropin subunit beta (147 aa).

The signal sequence occupies residues 1-20; the sequence is MRVVLLASGVLCLLAGQVLS. Intrachain disulfides connect Cys-22–Cys-72, Cys-36–Cys-87, Cys-39–Cys-126, Cys-47–Cys-103, Cys-51–Cys-105, and Cys-108–Cys-115. A glycan (N-linked (GlcNAc...) asparagine) is linked at Asn-43.

This sequence belongs to the glycoprotein hormones subunit beta family. In terms of assembly, heterodimer of a common alpha chain and a unique beta chain which confers biological specificity to thyrotropin, lutropin, follitropin and gonadotropin.

The protein localises to the secreted. Indispensable for the control of thyroid structure and metabolism. May play some role in the biological processes of the immature fishes. This is Thyrotropin subunit beta (tshb) from Anguilla japonica (Japanese eel).